Reading from the N-terminus, the 312-residue chain is Protoheme IX farnesyltransferase (312 aa).

The next 8 helical transmembrane spans lie at 12 to 32 (LALT…PAML), 41 to 61 (FGLI…ANTF), 93 to 113 (VFAW…CHSW), 114 to 134 (LAAG…TKWL), 141 to 161 (NVIW…AVIT), 168 to 188 (FHAG…IFFW), 240 to 260 (VPAA…WFII), and 290 to 310 (ILFV…AHAV).

The protein belongs to the UbiA prenyltransferase family. Protoheme IX farnesyltransferase subfamily.

It localises to the cell membrane. The catalysed reaction is heme b + (2E,6E)-farnesyl diphosphate + H2O = Fe(II)-heme o + diphosphate. The protein operates within porphyrin-containing compound metabolism; heme O biosynthesis; heme O from protoheme: step 1/1. In terms of biological role, converts heme B (protoheme IX) to heme O by substitution of the vinyl group on carbon 2 of heme B porphyrin ring with a hydroxyethyl farnesyl side group. This chain is Protoheme IX farnesyltransferase, found in Corynebacterium jeikeium (strain K411).